A 519-amino-acid chain; its full sequence is Polyamine aminopropyltransferase (519 aa).

The next 7 helical transmembrane spans lie at 17–37, 53–73, 86–106, 109–129, 158–178, 180–200, and 208–228; these read LLLV…LALV, LIVA…KPFL, LLGL…AVVG, LWML…ELPL, LGAL…LGMM, GAAA…CVLL, and QFIR…TVLV. Residues 200–463 are spermidine synthase; that stretch reads LRHLLPRAQF…FQLCGPEGTE (264 aa). Residues 225-459 form the PABS domain; it reads TVLVRSDGIV…GDWGFQLCGP (235 aa). Q255 serves as a coordination point for S-methyl-5'-thioadenosine. D307 lines the spermidine pocket. Residues E326 and 358–359 each bind S-methyl-5'-thioadenosine; that span reads DA. D379 (proton acceptor) is an active-site residue.

Belongs to the spermidine/spermine synthase family. As to quaternary structure, homodimer or homotetramer.

Its subcellular location is the cell membrane. It carries out the reaction S-adenosyl 3-(methylsulfanyl)propylamine + putrescine = S-methyl-5'-thioadenosine + spermidine + H(+). It functions in the pathway amine and polyamine biosynthesis; spermidine biosynthesis; spermidine from putrescine: step 1/1. In terms of biological role, catalyzes the irreversible transfer of a propylamine group from the amino donor S-adenosylmethioninamine (decarboxy-AdoMet) to putrescine (1,4-diaminobutane) to yield spermidine. The protein is Polyamine aminopropyltransferase of Corynebacterium efficiens (strain DSM 44549 / YS-314 / AJ 12310 / JCM 11189 / NBRC 100395).